A 449-amino-acid polypeptide reads, in one-letter code: Elongation factor 1-alpha 1 (449 aa).

One can recognise a tr-type G domain in the interval 5–230 (KFHINIVVIG…DQINEPKRPS (226 aa)). The segment at 14-21 (GHVDSGKS) is G1. 14–21 (GHVDSGKS) contributes to the GTP binding site. Lysine 55 is subject to N6,N6-dimethyllysine. A G2 region spans residues 70–74 (GITID). Lysine 79 is subject to N6,N6,N6-trimethyllysine. The tract at residues 91 to 94 (DAPG) is G3. GTP contacts are provided by residues 91–95 (DAPGH) and 153–156 (NKMD). Positions 153 to 156 (NKMD) are G4. Residue lysine 187 is modified to N6,N6,N6-trimethyllysine. The tract at residues 194-196 (SGF) is G5. An N6-methyllysine modification is found at lysine 261. An N6,N6,N6-trimethyllysine mark is found at lysine 306 and lysine 396. Residues lysine 438 and lysine 441 each participate in a glycyl lysine isopeptide (Lys-Gly) (interchain with G-Cter in ubiquitin) cross-link.

It belongs to the TRAFAC class translation factor GTPase superfamily. Classic translation factor GTPase family. EF-Tu/EF-1A subfamily.

The protein localises to the cytoplasm. Functionally, this protein promotes the GTP-dependent binding of aminoacyl-tRNA to the A-site of ribosomes during protein biosynthesis. The polypeptide is Elongation factor 1-alpha 1 (A1) (Arabidopsis thaliana (Mouse-ear cress)).